Consider the following 149-residue polypeptide: 1,4-dihydroxy-2-naphthoyl-CoA hydrolase (149 aa).

The active site involves D19.

Belongs to the 4-hydroxybenzoyl-CoA thioesterase family. DHNA-CoA hydrolase subfamily.

It carries out the reaction 1,4-dihydroxy-2-naphthoyl-CoA + H2O = 1,4-dihydroxy-2-naphthoate + CoA + H(+). It participates in cofactor biosynthesis; phylloquinone biosynthesis. The protein operates within quinol/quinone metabolism; 1,4-dihydroxy-2-naphthoate biosynthesis; 1,4-dihydroxy-2-naphthoate from chorismate: step 7/7. Its function is as follows. Catalyzes the hydrolysis of 1,4-dihydroxy-2-naphthoyl-CoA (DHNA-CoA) to 1,4-dihydroxy-2-naphthoate (DHNA), a reaction involved in phylloquinone (vitamin K1) biosynthesis. This is 1,4-dihydroxy-2-naphthoyl-CoA hydrolase from Synechococcus sp. (strain CC9902).